The chain runs to 76 residues: Beta-defensin 121 (76 aa).

A signal peptide spans 1-15 (MKLLLLLLTVTLLLA). 3 disulfides stabilise this stretch: Cys23–Cys50, Cys30–Cys44, and Cys34–Cys51.

It belongs to the beta-defensin family. Abundant expression in the male reproductive tract only.

The protein resides in the secreted. Has antibacterial activity. This Macaca mulatta (Rhesus macaque) protein is Beta-defensin 121 (DEFB121).